Consider the following 324-residue polypeptide: DNA-directed RNA polymerase subunit alpha (324 aa).

The tract at residues 1–228 (MIEFQKPTIR…EHFNLFTDLS (228 aa)) is alpha N-terminal domain (alpha-NTD). The interval 245-324 (RNKLLDMTIE…STPKEEEEEK (80 aa)) is alpha C-terminal domain (alpha-CTD).

Belongs to the RNA polymerase alpha chain family. As to quaternary structure, homodimer. The RNAP catalytic core consists of 2 alpha, 1 beta, 1 beta' and 1 omega subunit. When a sigma factor is associated with the core the holoenzyme is formed, which can initiate transcription.

The catalysed reaction is RNA(n) + a ribonucleoside 5'-triphosphate = RNA(n+1) + diphosphate. In terms of biological role, DNA-dependent RNA polymerase catalyzes the transcription of DNA into RNA using the four ribonucleoside triphosphates as substrates. The protein is DNA-directed RNA polymerase subunit alpha of Caldicellulosiruptor bescii (strain ATCC BAA-1888 / DSM 6725 / KCTC 15123 / Z-1320) (Anaerocellum thermophilum).